A 158-amino-acid polypeptide reads, in one-letter code: Regenerating islet-derived protein 4 (158 aa).

Residues Met1–Gly22 form the signal peptide. Cysteines 30 and 41 form a disulfide. The C-type lectin domain maps to His37–Lys155. N-linked (GlcNAc...) asparagine glycosylation is present at Asn50. Intrachain disulfides connect Cys58–Cys154 and Cys129–Cys146. A carbohydrate-binding positions include Asp98 to Gln103 and Asn135 to Asn137.

As to expression, highly expressed in the gastrointestinal tract including the duodenum, jejunum, ileum, ileocecum, appendix, descending colon, pancreas and small intestine. Weakly expressed in normal colon and stomach. Strongly expressed in most colorectal tumors than in normal colon. Preferentially expressed in mucinous tumors and in some cases neuro-endocrine tumors. Expressed in mucus-secreting cells and enterocyte-like cells. In small intestine expressed at the basal perinuclear zone of goblet cells.

It localises to the secreted. Calcium-independent lectin displaying mannose-binding specificity and able to maintain carbohydrate recognition activity in an acidic environment. May be involved in inflammatory and metaplastic responses of the gastrointestinal epithelium. This is Regenerating islet-derived protein 4 (REG4) from Homo sapiens (Human).